The following is a 370-amino-acid chain: Protein DVU_0535 (370 aa).

Topologically, residues 1 to 258 are cytoplasmic; sequence MDRRRFLTLL…EELGTKSAPE (258 aa). 4Fe-4S ferredoxin-type domains lie at 40–70, 101–132, and 133–162; these read YGVL…APKA, DHPV…KNPD, and GSVT…FQYA. Residues Cys49, Cys52, Cys55, Cys59, Cys110, Cys113, Cys118, Cys122, Cys142, Cys145, Cys148, Cys152, Cys172, Cys175, Cys187, and Cys191 each coordinate [4Fe-4S] cluster. A helical membrane pass occupies residues 259–284; the sequence is YTAGALGAVPMVVGIWPILLTGAYAI. Residues 285–370 are Periplasmic-facing; sequence TKRKEKIAAE…DDAGKPGEDA (86 aa). The span at 345–355 shows a compositional bias: basic and acidic residues; it reads FEEELAAKEQP. Positions 345-370 are disordered; it reads FEEELAAKEQPEAPEGDDAGKPGEDA.

The protein resides in the cell membrane. In terms of biological role, HMWC (high-molecular-weight cytochrome c precursor), ORF2, ORF3, ORF4, ORF5, ORF6 in the HMC operon form a transmembrane protein complex that allows electron flow from the periplasmic hydrogenase to the cytoplasmic enzymes that catalyze reduction of sulfates. ORF2 is a transmembrane redox protein. This Nitratidesulfovibrio vulgaris (strain ATCC 29579 / DSM 644 / CCUG 34227 / NCIMB 8303 / VKM B-1760 / Hildenborough) (Desulfovibrio vulgaris) protein is Protein DVU_0535.